Consider the following 104-residue polypeptide: Large ribosomal subunit protein uL24 (104 aa).

The protein belongs to the universal ribosomal protein uL24 family. In terms of assembly, part of the 50S ribosomal subunit.

One of two assembly initiator proteins, it binds directly to the 5'-end of the 23S rRNA, where it nucleates assembly of the 50S subunit. In terms of biological role, one of the proteins that surrounds the polypeptide exit tunnel on the outside of the subunit. The chain is Large ribosomal subunit protein uL24 from Flavobacterium psychrophilum (strain ATCC 49511 / DSM 21280 / CIP 103535 / JIP02/86).